We begin with the raw amino-acid sequence, 419 residues long: UDP-N-acetylglucosamine 1-carboxyvinyltransferase (419 aa).

Position 22–23 (22–23) interacts with phosphoenolpyruvate; it reads KN. Arg91 is a binding site for UDP-N-acetyl-alpha-D-glucosamine. Cys115 acts as the Proton donor in catalysis. Position 115 is a 2-(S-cysteinyl)pyruvic acid O-phosphothioketal (Cys115). UDP-N-acetyl-alpha-D-glucosamine-binding positions include 120 to 124, 160 to 163, Asp305, and Val327; these read RPVDL and KVSV.

Belongs to the EPSP synthase family. MurA subfamily.

It is found in the cytoplasm. It carries out the reaction phosphoenolpyruvate + UDP-N-acetyl-alpha-D-glucosamine = UDP-N-acetyl-3-O-(1-carboxyvinyl)-alpha-D-glucosamine + phosphate. It functions in the pathway cell wall biogenesis; peptidoglycan biosynthesis. Its function is as follows. Cell wall formation. Adds enolpyruvyl to UDP-N-acetylglucosamine. The chain is UDP-N-acetylglucosamine 1-carboxyvinyltransferase from Shigella sonnei (strain Ss046).